We begin with the raw amino-acid sequence, 191 residues long: Adenylate kinase (191 aa).

ATP is bound at residue 10 to 15; that stretch reads GAGKGT. The interval 30–59 is NMP; the sequence is STGDIFRANVTEGTPLGVEAKRYMDAGEYV. AMP-binding positions include T31, R36, 57-59, 85-88, and Q92; these read EYV and GYPR. Positions 126 to 136 are LID; it reads QRAQVEGRADD. Position 127 (R127) interacts with ATP. AMP-binding residues include R133 and R144. Position 172 (G172) interacts with ATP.

Belongs to the adenylate kinase family. Monomer.

The protein localises to the cytoplasm. It catalyses the reaction AMP + ATP = 2 ADP. Its pathway is purine metabolism; AMP biosynthesis via salvage pathway; AMP from ADP: step 1/1. Its function is as follows. Catalyzes the reversible transfer of the terminal phosphate group between ATP and AMP. Plays an important role in cellular energy homeostasis and in adenine nucleotide metabolism. This Nocardioides sp. (strain ATCC BAA-499 / JS614) protein is Adenylate kinase.